The following is a 397-amino-acid chain: uncharacterized protein (397 aa).

4 consecutive transmembrane segments (helical) span residues 22 to 42 (ILTM…VAVG), 270 to 290 (IMTT…GIGV), 327 to 347 (VVLT…GAAL), and 362 to 382 (VVCG…MLPA).

The protein belongs to the ABC-4 integral membrane protein family. As to quaternary structure, part of a complex composed of YknX, YknY and YknZ. The complex interacts with YknW.

Its subcellular location is the cell membrane. It is found in the membrane raft. In terms of biological role, part of an unusual four-component transporter, which is required for protection against the killing factor SdpC (sporulation-delaying protein). This is an uncharacterized protein from Bacillus subtilis (strain 168).